Here is a 345-residue protein sequence, read N- to C-terminus: MTTVLAIETSCDETAAAVVKNRHIYSNVIASQIAAHRPYGGVVPEVASRQHLENINAVIDEALAVAGLGWAEIDAIAATCAPGLVGSLLIGLTAAKTLALVHQKPFLGIHHLEGHIAASYLAHPDLHPPFLCLLVSGGHTSLIYVKDIGDYETLGQTRDDAAGEAFDKVARLLGLGYPGGPVIDRLASQGNPAAFHLPEGNISLPGGGYHPYDSSFSGLKTAVLRLVEKLKTEGDLPIADLAASFQDCVARSLTRRTIACALDYSLETIAIGGGVAANRGLRSHLQAAAAAHNLRVLFPPLSLCTDNAAMIACAAAAHLERGHTSPLTLGGQSRLAITEVMQLYQ.

Fe cation-binding residues include H111 and H115. Substrate contacts are provided by residues 134–138, D167, G180, D184, and N278; that span reads LVSGG. Residue D306 coordinates Fe cation.

It belongs to the KAE1 / TsaD family. Fe(2+) serves as cofactor.

Its subcellular location is the cytoplasm. The enzyme catalyses L-threonylcarbamoyladenylate + adenosine(37) in tRNA = N(6)-L-threonylcarbamoyladenosine(37) in tRNA + AMP + H(+). Its function is as follows. Required for the formation of a threonylcarbamoyl group on adenosine at position 37 (t(6)A37) in tRNAs that read codons beginning with adenine. Is involved in the transfer of the threonylcarbamoyl moiety of threonylcarbamoyl-AMP (TC-AMP) to the N6 group of A37, together with TsaE and TsaB. TsaD likely plays a direct catalytic role in this reaction. The chain is tRNA N6-adenosine threonylcarbamoyltransferase from Cyanothece sp. (strain PCC 7425 / ATCC 29141).